Consider the following 479-residue polypeptide: Glycogen synthase (479 aa).

Lys-15 serves as a coordination point for ADP-alpha-D-glucose.

Belongs to the glycosyltransferase 1 family. Bacterial/plant glycogen synthase subfamily.

The enzyme catalyses [(1-&gt;4)-alpha-D-glucosyl](n) + ADP-alpha-D-glucose = [(1-&gt;4)-alpha-D-glucosyl](n+1) + ADP + H(+). The protein operates within glycan biosynthesis; glycogen biosynthesis. Its function is as follows. Synthesizes alpha-1,4-glucan chains using ADP-glucose. This chain is Glycogen synthase, found in Acidiphilium cryptum (strain JF-5).